Consider the following 198-residue polypeptide: Recombination protein RecR (198 aa).

The C4-type zinc finger occupies 57-72 (CLNCGCLTDEAACYFC). Residues 80–175 (QIICVTAFPR…QISRLAFGLP (96 aa)) form the Toprim domain.

Belongs to the RecR family.

Functionally, may play a role in DNA repair. It seems to be involved in an RecBC-independent recombinational process of DNA repair. It may act with RecF and RecO. The sequence is that of Recombination protein RecR from Protochlamydia amoebophila (strain UWE25).